Here is a 278-residue protein sequence, read N- to C-terminus: HTH-type transcriptional activator RhaS (278 aa).

Residues 174–272 (NLLLAWLEDH…NWSPRDIRQG (99 aa)) enclose the HTH araC/xylS-type domain. 2 DNA-binding regions (H-T-H motif) span residues 191–212 (DAVAEQFSLSLRTLHRQLKQQT) and 239–262 (VTDIAYRCGFSDSNHFSTLFRREF).

As to quaternary structure, binds DNA as a dimer.

The protein resides in the cytoplasm. In terms of biological role, activates expression of the rhaBAD and rhaT operons. The chain is HTH-type transcriptional activator RhaS from Escherichia coli (strain SE11).